Consider the following 127-residue polypeptide: MAKLTKKNFIDSLREMSLLEVKELVDGLKEEFGIDPNALFVSGSNQDNNKIQVEEKTEFSVIVKDFGDSSNKIPIIKTVKEITGFGLYDIQKLLNTPDAVIQEKISKEKAEEIKNKLELIGAVVEIQ.

It belongs to the bacterial ribosomal protein bL12 family. As to quaternary structure, homodimer. Part of the ribosomal stalk of the 50S ribosomal subunit. Forms a multimeric L10(L12)X complex, where L10 forms an elongated spine to which 2 to 4 L12 dimers bind in a sequential fashion. Binds GTP-bound translation factors.

Its function is as follows. Forms part of the ribosomal stalk which helps the ribosome interact with GTP-bound translation factors. Is thus essential for accurate translation. This chain is Large ribosomal subunit protein bL12, found in Phytoplasma mali (strain AT).